The primary structure comprises 270 residues: Formamidopyrimidine-DNA glycosylase (270 aa).

P2 serves as the catalytic Schiff-base intermediate with DNA. E3 (proton donor) is an active-site residue. The active-site Proton donor; for beta-elimination activity is K58. 3 residues coordinate DNA: H91, R110, and R151. The FPG-type zinc finger occupies 236-270 (FVYGRGGQPCKVCGTALREVKLGQRASVYCPRCQR). Residue R260 is the Proton donor; for delta-elimination activity of the active site.

It belongs to the FPG family. Monomer. It depends on Zn(2+) as a cofactor.

It carries out the reaction Hydrolysis of DNA containing ring-opened 7-methylguanine residues, releasing 2,6-diamino-4-hydroxy-5-(N-methyl)formamidopyrimidine.. It catalyses the reaction 2'-deoxyribonucleotide-(2'-deoxyribose 5'-phosphate)-2'-deoxyribonucleotide-DNA = a 3'-end 2'-deoxyribonucleotide-(2,3-dehydro-2,3-deoxyribose 5'-phosphate)-DNA + a 5'-end 5'-phospho-2'-deoxyribonucleoside-DNA + H(+). Its function is as follows. Involved in base excision repair of DNA damaged by oxidation or by mutagenic agents. Acts as a DNA glycosylase that recognizes and removes damaged bases. Has a preference for oxidized purines, such as 7,8-dihydro-8-oxoguanine (8-oxoG). Has AP (apurinic/apyrimidinic) lyase activity and introduces nicks in the DNA strand. Cleaves the DNA backbone by beta-delta elimination to generate a single-strand break at the site of the removed base with both 3'- and 5'-phosphates. This is Formamidopyrimidine-DNA glycosylase from Pseudomonas putida (strain GB-1).